Here is a 604-residue protein sequence, read N- to C-terminus: Elongation factor 4 (604 aa).

In terms of domain architecture, tr-type G spans 7–189 (KRIRNFCIIA…SVVDRVPPPA (183 aa)). GTP-binding positions include 19–24 (DHGKST) and 136–139 (NKID).

This sequence belongs to the TRAFAC class translation factor GTPase superfamily. Classic translation factor GTPase family. LepA subfamily.

Its subcellular location is the cell inner membrane. The enzyme catalyses GTP + H2O = GDP + phosphate + H(+). Required for accurate and efficient protein synthesis under certain stress conditions. May act as a fidelity factor of the translation reaction, by catalyzing a one-codon backward translocation of tRNAs on improperly translocated ribosomes. Back-translocation proceeds from a post-translocation (POST) complex to a pre-translocation (PRE) complex, thus giving elongation factor G a second chance to translocate the tRNAs correctly. Binds to ribosomes in a GTP-dependent manner. In Synechococcus sp. (strain CC9311), this protein is Elongation factor 4.